The primary structure comprises 148 residues: Putative FAD-linked sulfhydryl oxidase 096R (148 aa).

The ERV/ALR sulfhydryl oxidase domain occupies 1 to 103 (MSIDPKLWGN…LAAKTVFQRY (103 aa)). A disulfide bond links cysteine 48 and cysteine 51. A helical membrane pass occupies residues 122–142 (WSPWLTTALAVILVVVVAGIG).

Belongs to the IIV-6 347L family. FAD serves as cofactor.

Its subcellular location is the membrane. The enzyme catalyses 2 R'C(R)SH + O2 = R'C(R)S-S(R)CR' + H2O2. FAD-dependent sulfhydryl oxidase that catalyzes disulfide bond formation. The sequence is that of Putative FAD-linked sulfhydryl oxidase 096R from Aedes vexans (Inland floodwater mosquito).